A 175-amino-acid chain; its full sequence is MEEEKRLELRLAPPCHQFTSNNNINGSKQKSSTKETSFLSNNRVEVAPVVGWPPVRSSRRNLTAQLKEEMKKKESDEEKELYVKINMEGVPIGRKVNLSAYNNYQQLSHAVDQLFSKKDSWDLNRQYTLVYEDTEGDKVLVGDVPWEMFVSTVKRLHVLKTSHAFSLSPRKHGKE.

Residues 1–39 form a disordered region; it reads MEEEKRLELRLAPPCHQFTSNNNINGSKQKSSTKETSFL. The short motif at 7-11 is the EAR-like (transcriptional repression) element; the sequence is LELRL. Residues 17–39 show a composition bias toward polar residues; the sequence is QFTSNNNINGSKQKSSTKETSFL. Residues 80–161 form the PB1 domain; that stretch reads ELYVKINMEG…TVKRLHVLKT (82 aa).

Belongs to the Aux/IAA family. Homodimers and heterodimers. Interacts with TPL. In roots and inflorescence stems.

Its subcellular location is the nucleus. Functionally, aux/IAA proteins are short-lived transcriptional factors that function as repressors of early auxin response genes at low auxin concentrations. Repression is thought to result from the interaction with auxin response factors (ARFs), proteins that bind to the auxin-responsive promoter element (AuxRE). Formation of heterodimers with ARF proteins may alter their ability to modulate early auxin response genes expression. In Arabidopsis thaliana (Mouse-ear cress), this protein is Auxin-responsive protein IAA28 (IAA28).